A 366-amino-acid polypeptide reads, in one-letter code: MNKILLYCRQGFEKECAAEITAKAAEREIFGFARVKDDSAYVLFECYQQGEAEKLLAELPFSELIFSRQMIVVGELLRDLPPTNRITPVVGMLTGVVEKGGDLRVEVPDTNASKELLKFCRKFTVPLRASLRKDGILLNFESAKRPVVHVFFIASGCCYVGYSLPANNSPLFMGIPRLKFPSDAPSRSTLKLEEAFHVFIPADEWDERLASGMWAVDLGACPGGWTYQLVQRSMMVNAVDNGPMAPSLMDTGQVFHQREDGFKYRPTRNNNYWVVCDMVEKPVRVANLMADWLVNGWCREAIFNLKLPMKKRYEEVAQNLAMIHEKLAQNGINAQIQARQLYHDREEVTVHIRRVWSATPGRRDER.

Residues S188, 221–224 (CPGG), D240, D260, and D277 contribute to the S-adenosyl-L-methionine site. K306 acts as the Proton acceptor in catalysis.

Belongs to the class I-like SAM-binding methyltransferase superfamily. RNA methyltransferase RlmE family. RlmM subfamily. As to quaternary structure, monomer.

It localises to the cytoplasm. The catalysed reaction is cytidine(2498) in 23S rRNA + S-adenosyl-L-methionine = 2'-O-methylcytidine(2498) in 23S rRNA + S-adenosyl-L-homocysteine + H(+). Functionally, catalyzes the 2'-O-methylation at nucleotide C2498 in 23S rRNA. This chain is Ribosomal RNA large subunit methyltransferase M, found in Erwinia tasmaniensis (strain DSM 17950 / CFBP 7177 / CIP 109463 / NCPPB 4357 / Et1/99).